Reading from the N-terminus, the 582-residue chain is Arginine--tRNA ligase (582 aa).

The 'HIGH' region motif lies at 136-146 (ANPTGPMHMGH).

Belongs to the class-I aminoacyl-tRNA synthetase family. Monomer.

It is found in the cytoplasm. The catalysed reaction is tRNA(Arg) + L-arginine + ATP = L-arginyl-tRNA(Arg) + AMP + diphosphate. The chain is Arginine--tRNA ligase from Novosphingobium aromaticivorans (strain ATCC 700278 / DSM 12444 / CCUG 56034 / CIP 105152 / NBRC 16084 / F199).